The chain runs to 124 residues: U33-theraphotoxin-Cg1a (124 aa).

Residues 1–17 (MKFAVAIAFTLLVCVFA) form the signal peptide. Disulfide bonds link cysteine 26–cysteine 37, cysteine 31–cysteine 51, cysteine 36–cysteine 75, cysteine 61–cysteine 83, and cysteine 77–cysteine 94. The span at 93 to 108 (RCQEESGKSDKSKESQ) shows a compositional bias: basic and acidic residues. Positions 93 to 124 (RCQEESGKSDKSKESQGSDESEESEESKESCG) are disordered. Over residues 109–118 (GSDESEESEE) the composition is skewed to acidic residues.

Belongs to the neurotoxin 32 family. Expressed by the venom gland.

The protein localises to the secreted. This chain is U33-theraphotoxin-Cg1a, found in Chilobrachys guangxiensis (Chinese earth tiger tarantula).